The sequence spans 729 residues: GIHVAGGRGKGYACLMPPLRPKAQAQSAQEHFEIFPYEQETNAGLALVGELKQGVYVSCPTKTSFERTPESYHLGLPCEKEPSILSSHDPRIPEHVEGYCPFRAGIQKYANPMGHLDHDLMYEVAHDMQESWHDCVQDFTFPEVDLETAINGIDMVEYMECIPKSTSEGFPHVLSRAPGEKGKMRFLEGDGEKFSLREGTSVKKAYDLLQEEIDRSVPTLVAIECPKDEKLPLRKIYTSPKTRCFSILPMEYNLLVRQKFLHFVRFMMKRRDVLPSQVGVNPYSLEWGAIARRLQEVGNSILCCDYSSFDGLMSSQVMSCIADTMNDFMGGDVSLKRQRKNLLMACCSRFSVVKGNVWRVEGGIPSGFPLTVVMNGIFNELLVRYCFKKIMREGGATPLECSAFDSYIRFVVYGDDNLISVSPVIHDKFNGKLLKECMARFGVTITDGKDKTLPTLEFRPLEDCDFLKRGFIQRSELVWDAPEERSSLYTQLHYVSTKMQSLEDAYTGNLVNVIRELYMHSPKEASDLRRKALRDLPWLSRSKIGTMENVQAFYAMQRAGYRMDESIDVICDLAKLGKYVKGEACKEIVWLTPTVGACDLRYFDWQNAKVDEFWVLCQTNYHEFDENRVMQLCWTPGSGRGGLPTAHWLRTCMLLEKGNVRKKLHWAMAEKKKIIFCAKGGVLIPTVMAGIFLSKEDPMLNLAGVSTLTCAMESVKTLGFLKEGNLNLF.

The region spanning 1 to 21 (GIHVAGGRGKGYACLMPPLRP) is the Peptidase C3 domain. In terms of domain architecture, RdRp catalytic spans 299–429 (NSILCCDYSS…SVSPVIHDKF (131 aa)).

In terms of processing, specific enzymatic cleavages by picornain 3C-like protease in vivo yield mature proteins. Picornain 3C-like protease is autocatalytically processed.

It localises to the host endoplasmic reticulum. It carries out the reaction RNA(n) + a ribonucleoside 5'-triphosphate = RNA(n+1) + diphosphate. In terms of biological role, thiol protease that cleaves the RNA1 and RNA2 polyproteins. Functionally, replicates the viral genome. The polypeptide is RNA1 polyprotein (Solanum tuberosum (Potato)).